A 427-amino-acid polypeptide reads, in one-letter code: Glutamyl-tRNA reductase (427 aa).

Residues 49 to 52 (TCNR), serine 105, 110 to 112 (EPQ), and glutamine 116 each bind substrate. The Nucleophile role is filled by cysteine 50. 185–190 (AAGEMN) contributes to the NADP(+) binding site.

It belongs to the glutamyl-tRNA reductase family. Homodimer.

It catalyses the reaction (S)-4-amino-5-oxopentanoate + tRNA(Glu) + NADP(+) = L-glutamyl-tRNA(Glu) + NADPH + H(+). The protein operates within porphyrin-containing compound metabolism; protoporphyrin-IX biosynthesis; 5-aminolevulinate from L-glutamyl-tRNA(Glu): step 1/2. Its function is as follows. Catalyzes the NADPH-dependent reduction of glutamyl-tRNA(Glu) to glutamate 1-semialdehyde (GSA). The chain is Glutamyl-tRNA reductase from Acinetobacter baumannii (strain AB307-0294).